The following is a 351-amino-acid chain: S-adenosylmethionine:tRNA ribosyltransferase-isomerase (351 aa).

It belongs to the QueA family. As to quaternary structure, monomer.

It is found in the cytoplasm. It catalyses the reaction 7-aminomethyl-7-carbaguanosine(34) in tRNA + S-adenosyl-L-methionine = epoxyqueuosine(34) in tRNA + adenine + L-methionine + 2 H(+). Its pathway is tRNA modification; tRNA-queuosine biosynthesis. Transfers and isomerizes the ribose moiety from AdoMet to the 7-aminomethyl group of 7-deazaguanine (preQ1-tRNA) to give epoxyqueuosine (oQ-tRNA). The chain is S-adenosylmethionine:tRNA ribosyltransferase-isomerase from Hyphomonas neptunium (strain ATCC 15444).